Consider the following 466-residue polypeptide: NADPH:adrenodoxin oxidoreductase, mitochondrial (466 aa).

FAD is bound by residues A40, E61, L69, and L105. Residues 176–179, 220–221, and E232 each bind NADP(+); these read QGNV and RR. Residues W379 and 386-388 each bind FAD; that span reads GVI. G386 is a binding site for NADP(+).

The protein belongs to the ferredoxin--NADP reductase type 1 family. Requires FAD as cofactor. As to expression, expressed predominantly in prothoracic gland of the larval ring gland and nurse cells of the adult ovary. Low expression is all adult tissues examined.

Its subcellular location is the mitochondrion inner membrane. The enzyme catalyses 2 reduced [adrenodoxin] + NADP(+) + H(+) = 2 oxidized [adrenodoxin] + NADPH. The protein operates within steroid metabolism; cholesterol metabolism. Functionally, required for synthesis of steroid hormones, for olfactory sensory behavior and completion of the second larval molt (a steroid mediated developmental transition) and pupariation. This chain is NADPH:adrenodoxin oxidoreductase, mitochondrial (dare), found in Drosophila melanogaster (Fruit fly).